The following is a 340-amino-acid chain: Ketol-acid reductoisomerase (NADP(+)) (340 aa).

One can recognise a KARI N-terminal Rossmann domain in the interval I3 to T183. NADP(+) contacts are provided by residues F26 to Q29, S54, and D84 to Q87. The active site involves H109. Residue G135 participates in NADP(+) binding. The KARI C-terminal knotted domain occupies T184–I329. Positions 192, 196, 228, and 232 each coordinate Mg(2+). S253 contacts substrate.

It belongs to the ketol-acid reductoisomerase family. It depends on Mg(2+) as a cofactor.

The catalysed reaction is (2R)-2,3-dihydroxy-3-methylbutanoate + NADP(+) = (2S)-2-acetolactate + NADPH + H(+). The enzyme catalyses (2R,3R)-2,3-dihydroxy-3-methylpentanoate + NADP(+) = (S)-2-ethyl-2-hydroxy-3-oxobutanoate + NADPH + H(+). Its pathway is amino-acid biosynthesis; L-isoleucine biosynthesis; L-isoleucine from 2-oxobutanoate: step 2/4. It participates in amino-acid biosynthesis; L-valine biosynthesis; L-valine from pyruvate: step 2/4. Its function is as follows. Involved in the biosynthesis of branched-chain amino acids (BCAA). Catalyzes an alkyl-migration followed by a ketol-acid reduction of (S)-2-acetolactate (S2AL) to yield (R)-2,3-dihydroxy-isovalerate. In the isomerase reaction, S2AL is rearranged via a Mg-dependent methyl migration to produce 3-hydroxy-3-methyl-2-ketobutyrate (HMKB). In the reductase reaction, this 2-ketoacid undergoes a metal-dependent reduction by NADPH to yield (R)-2,3-dihydroxy-isovalerate. The protein is Ketol-acid reductoisomerase (NADP(+)) of Campylobacter concisus (strain 13826).